Consider the following 423-residue polypeptide: Limonoid 21-O-acetyltransferse (423 aa).

Active-site proton acceptor residues include His-152 and Asp-362.

It belongs to the plant acyltransferase family. In terms of assembly, monomer. As to expression, mainly expressed in petioles.

The enzyme catalyses isomeliandiol + acetyl-CoA = 21-O-acetyl-isomeliandiol + CoA. It functions in the pathway secondary metabolite biosynthesis; terpenoid biosynthesis. Functionally, acetyltransferase involved in the biosynthesis of limonoids triterpene natural products such as azadirachtin, an antifeedant widely used as bioinsecticide, and possessing many medicinal applications including anti-tumoral, anti-malarial, anti-rheumatic, antibacterial, anti-inflammatory, anti-pyretic and diuretic effects. Catalyzes the formation of 21-O-acetyl-isomeliandiol from isomeliandiol. In Melia azedarach (Chinaberry tree), this protein is Limonoid 21-O-acetyltransferse.